The following is a 206-amino-acid chain: Halorhodopsin (206 aa).

A helical transmembrane segment spans residues 1–15 (IALAGLSILLFVYMG). Over 16 to 21 (RNVEDP) the chain is Cytoplasmic. The helical transmembrane segment at 22–45 (RAQLIFVATLMVPLVSISSYTGLV) threads the bilayer. At 46-75 (SGLTVGFLEMPAGHALAGMGAGPEGGVFTP) the chain is on the extracellular side. A helical transmembrane segment spans residues 76–97 (WGRYLTWAFSTPMILIALGLLA). At 98 to 100 (GSN) the chain is on the cytoplasmic side. Residues 101–124 (MSKLFTAVVADVGMCITGLAAALT) traverse the membrane as a helical segment. Over 125–127 (TSS) the chain is Extracellular. The helical transmembrane segment at 128 to 150 (YLLRWVWYGISCAFFVVVLYILL) threads the bilayer. At 151 to 162 (AEWAKDAEVAGT) the chain is on the cytoplasmic side. A helical transmembrane segment spans residues 163-186 (ADIFNTLKVLTVVLWLGYPIFWAL). Over 187–195 (GAEGLAVLD) the chain is Extracellular. Residues 196–206 (IAITSWAYSGM) traverse the membrane as a helical segment.

Belongs to the archaeal/bacterial/fungal opsin family.

The protein localises to the cell membrane. In terms of biological role, light-driven chloride pump. The polypeptide is Halorhodopsin (hop) (Halobacterium halobium (strain mex)).